The sequence spans 339 residues: Serpentine receptor class delta-32 (339 aa).

Transmembrane regions (helical) follow at residues 14-34 (AAVVSTLGIIFNGFLLFLIFF), 45-65 (VFLANTSITQLGYCICFLLTV), 94-114 (IFTTMLHFAVNSFLSIMLSMV), 128-148 (SGAFAMCILAYMIPLSMVVSI), 188-208 (LWVACCVSILCIPIYSVMFWC), 237-257 (ALTVQSLIPVFTLFPASLIFL), and 269-289 (FGYIIISLLSLSPTIDPLVTI).

Belongs to the nematode receptor-like protein srd family.

Its subcellular location is the membrane. This chain is Serpentine receptor class delta-32 (srd-32), found in Caenorhabditis elegans.